A 930-amino-acid chain; its full sequence is A disintegrin and metalloproteinase with thrombospondin motifs 5 (930 aa).

A signal peptide spans 1–16; it reads MLLGWASLLLCAFRLP. Positions 17-261 are excised as a propeptide; sequence LAAVGPAATP…PQTWWRRRRR (245 aa). 2 disordered regions span residues 24–69 and 206–231; these read ATPA…QRRR and RASC…PSGR. Residues 31-42 show a composition bias toward low complexity; sequence AGQPPTAAAAAQ. Residues 46 to 59 show a composition bias toward basic and acidic residues; it reads RQGEEVQERAEPPG. The short motif at 207–214 is the Cysteine switch element; that stretch reads ASCETPAS. Cys-209 serves as a coordination point for Zn(2+). The Peptidase M12B domain maps to 267-476; sequence RQVELLLVAD…GHGNCLLDLP (210 aa). 8 cysteine pairs are disulfide-bonded: Cys-342-Cys-394, Cys-371-Cys-376, Cys-388-Cys-471, Cys-426-Cys-455, Cys-497-Cys-519, Cys-508-Cys-529, Cys-514-Cys-548, and Cys-542-Cys-553. His-410 is a Zn(2+) binding site. Glu-411 is an active-site residue. 2 residues coordinate Zn(2+): His-414 and His-420. Residues 485 to 566 form the Disintegrin domain; that stretch reads ELPGQTYDAT…TKKKYYSTSS (82 aa). A glycan (N-linked (GlcNAc...) asparagine) is linked at Asn-498. Residues 567–622 enclose the TSP type-1 1 domain; it reads HGNWGSWGSWGQCSRSCGGGVQFAYRHCNNPAPRNNGRYCTGKRAIYRSCSLMPCP. C-linked (Man) tryptophan glycosylation is found at Trp-570 and Trp-573. Disulfide bonds link Cys-579-Cys-616, Cys-583-Cys-621, and Cys-594-Cys-606. A glycan (O-linked (Fuc...) serine) is linked at Ser-582. Asn-728, Asn-802, and Asn-807 each carry an N-linked (GlcNAc...) asparagine glycan. The spacer stretch occupies residues 732 to 874; sequence TKIVGTFNKK…HGSNKVGSHT (143 aa). Residues 875 to 929 enclose the TSP type-1 2 domain; it reads SQPQWVTGPWLACSRTCDTGWHTRTVQCQDGNRKLAKGCPLSQRPSAFKQCLLKK.

Zn(2+) serves as cofactor. In terms of processing, the precursor is cleaved by furin and PCSK7 outside of the cell. Post-translationally, glycosylated. Can be O-fucosylated by POFUT2 on a serine or a threonine residue found within the consensus sequence C1-X(2)-(S/T)-C2-G of the TSP type-1 repeat domains where C1 and C2 are the first and second cysteine residue of the repeat, respectively. Fucosylated repeats can then be further glycosylated by the addition of a beta-1,3-glucose residue by the glucosyltransferase, B3GALTL. Fucosylation mediates the efficient secretion of ADAMTS family members. Can also be C-glycosylated with one or two mannose molecules on tryptophan residues within the consensus sequence W-X-X-W of the TPRs, and N-glycosylated. These other glycosylations can also facilitate secretion. In terms of tissue distribution, expressed at low level in placenta primarily but also detected in heart and brain, cervix, uterus, bladder, esophagus, rib cartilage, chondroblastoma, fibrous tissue and a joint capsule from an arthritic patient.

Its subcellular location is the secreted. It localises to the extracellular space. It is found in the extracellular matrix. In terms of biological role, metalloproteinase that plays an important role in connective tissue organization, development, inflammation and cell migration. Extracellular matrix (ECM) degrading enzyme that show proteolytic activity toward the hyalectan group of chondroitin sulfate proteoglycans (CSPGs) including ACAN, VCAN, BCAN and NCAN. Cleavage within the hyalectans occurs at Glu-Xaa recognition motifs. Plays a role in embryonic development, including limb and cardiac morphogenesis, and skeletal muscle development through its VCAN remodeling properties. Cleaves VCAN in the pericellular matrix surrounding myoblasts, facilitating myoblast contact and fusion which is required for skeletal muscle development and regeneration. Participates in development of brown adipose tissue and browning of white adipose tissue. Plays an important role for T-lymphocyte migration from draining lymph nodes following viral infection. The protein is A disintegrin and metalloproteinase with thrombospondin motifs 5 (ADAMTS5) of Homo sapiens (Human).